The chain runs to 418 residues: Actin-related protein 3 (418 aa).

It belongs to the actin family. ARP3 subfamily. As to quaternary structure, component of the Arp2/3 complex.

The protein localises to the cytoplasm. Its subcellular location is the cytoskeleton. Its function is as follows. Functions as ATP-binding component of the Arp2/3 complex which is involved in regulation of actin polymerization and together with an activating nucleation-promoting factor (NPF) mediates the formation of branched actin networks. Seems to contact the pointed end of the daughter actin filament. Required during embryogenesis for the developmental migration of tail hemocytes anteriorly, along the ventral midline. This is Actin-related protein 3 from Drosophila melanogaster (Fruit fly).